Here is a 506-residue protein sequence, read N- to C-terminus: DEAD-box ATP-dependent RNA helicase CshA (506 aa).

The Q motif signature appears at 2 to 30 (QNFKELGISDNTVQSLESMGFKEPTPIQK). The region spanning 33–203 (IPYALQGIDI…QQFMKSPKII (171 aa)) is the Helicase ATP-binding domain. ATP is bound at residue 46 to 53 (AQTGTGKT). The DEAD box motif lies at 150–153 (DEAD). The Helicase C-terminal domain maps to 214–375 (QIEEFYTIVK…LRPPHRKEVL (162 aa)). The segment at 436 to 506 (EKPLSRKGRN…KGRTFADHQK (71 aa)) is disordered. Residues 468-480 (KRSKGYSSKKKST) are compositionally biased toward basic residues.

The protein belongs to the DEAD box helicase family. CshA subfamily. As to quaternary structure, oligomerizes, may be a member of the RNA degradosome.

The protein localises to the cytoplasm. The catalysed reaction is ATP + H2O = ADP + phosphate + H(+). In terms of biological role, DEAD-box RNA helicase possibly involved in RNA degradation. Unwinds dsRNA in both 5'- and 3'-directions, has RNA-dependent ATPase activity. The chain is DEAD-box ATP-dependent RNA helicase CshA from Staphylococcus aureus (strain MRSA252).